Consider the following 174-residue polypeptide: Crossover junction endodeoxyribonuclease RuvC (174 aa).

Catalysis depends on residues Asp-8, Glu-67, and Asp-139. Positions 8, 67, and 139 each coordinate Mg(2+).

It belongs to the RuvC family. As to quaternary structure, homodimer which binds Holliday junction (HJ) DNA. The HJ becomes 2-fold symmetrical on binding to RuvC with unstacked arms; it has a different conformation from HJ DNA in complex with RuvA. In the full resolvosome a probable DNA-RuvA(4)-RuvB(12)-RuvC(2) complex forms which resolves the HJ. Mg(2+) serves as cofactor.

The protein localises to the cytoplasm. It catalyses the reaction Endonucleolytic cleavage at a junction such as a reciprocal single-stranded crossover between two homologous DNA duplexes (Holliday junction).. Its function is as follows. The RuvA-RuvB-RuvC complex processes Holliday junction (HJ) DNA during genetic recombination and DNA repair. Endonuclease that resolves HJ intermediates. Cleaves cruciform DNA by making single-stranded nicks across the HJ at symmetrical positions within the homologous arms, yielding a 5'-phosphate and a 3'-hydroxyl group; requires a central core of homology in the junction. The consensus cleavage sequence is 5'-(A/T)TT(C/G)-3'. Cleavage occurs on the 3'-side of the TT dinucleotide at the point of strand exchange. HJ branch migration catalyzed by RuvA-RuvB allows RuvC to scan DNA until it finds its consensus sequence, where it cleaves and resolves the cruciform DNA. This is Crossover junction endodeoxyribonuclease RuvC from Pseudomonas syringae pv. syringae (strain B728a).